A 336-amino-acid chain; its full sequence is Dihydroorotate dehydrogenase (quinone) (336 aa).

FMN is bound by residues alanine 62 to lysine 66 and threonine 86. Lysine 66 serves as a coordination point for substrate. Position 111–115 (asparagine 111–phenylalanine 115) interacts with substrate. The FMN site is built by asparagine 139 and asparagine 172. Asparagine 172 is a binding site for substrate. The active-site Nucleophile is the serine 175. Asparagine 177 contributes to the substrate binding site. FMN-binding residues include lysine 217 and threonine 245. Residue asparagine 246–threonine 247 coordinates substrate. FMN-binding positions include glycine 268, glycine 297, and tyrosine 318–serine 319.

It belongs to the dihydroorotate dehydrogenase family. Type 2 subfamily. As to quaternary structure, monomer. FMN is required as a cofactor.

The protein resides in the cell membrane. The catalysed reaction is (S)-dihydroorotate + a quinone = orotate + a quinol. It participates in pyrimidine metabolism; UMP biosynthesis via de novo pathway; orotate from (S)-dihydroorotate (quinone route): step 1/1. Catalyzes the conversion of dihydroorotate to orotate with quinone as electron acceptor. In Vibrio atlanticus (strain LGP32) (Vibrio splendidus (strain Mel32)), this protein is Dihydroorotate dehydrogenase (quinone).